A 551-amino-acid polypeptide reads, in one-letter code: Dihydroxy-acid dehydratase (551 aa).

D78 provides a ligand contact to Mg(2+). C119 lines the [2Fe-2S] cluster pocket. Mg(2+)-binding residues include D120 and K121. Residue K121 is modified to N6-carboxylysine. C191 is a binding site for [2Fe-2S] cluster. E441 contacts Mg(2+). The active-site Proton acceptor is the S467.

It belongs to the IlvD/Edd family. Homodimer. It depends on [2Fe-2S] cluster as a cofactor. The cofactor is Mg(2+).

It carries out the reaction (2R)-2,3-dihydroxy-3-methylbutanoate = 3-methyl-2-oxobutanoate + H2O. The enzyme catalyses (2R,3R)-2,3-dihydroxy-3-methylpentanoate = (S)-3-methyl-2-oxopentanoate + H2O. Its pathway is amino-acid biosynthesis; L-isoleucine biosynthesis; L-isoleucine from 2-oxobutanoate: step 3/4. It participates in amino-acid biosynthesis; L-valine biosynthesis; L-valine from pyruvate: step 3/4. In terms of biological role, functions in the biosynthesis of branched-chain amino acids. Catalyzes the dehydration of (2R,3R)-2,3-dihydroxy-3-methylpentanoate (2,3-dihydroxy-3-methylvalerate) into 2-oxo-3-methylpentanoate (2-oxo-3-methylvalerate) and of (2R)-2,3-dihydroxy-3-methylbutanoate (2,3-dihydroxyisovalerate) into 2-oxo-3-methylbutanoate (2-oxoisovalerate), the penultimate precursor to L-isoleucine and L-valine, respectively. The protein is Dihydroxy-acid dehydratase of Pyrococcus furiosus (strain ATCC 43587 / DSM 3638 / JCM 8422 / Vc1).